Consider the following 162-residue polypeptide: AP-1 complex subunit sigma-2 (162 aa).

This sequence belongs to the adaptor complexes small subunit family. In terms of assembly, adaptor protein complex 1 (AP-1) is a heterotetramer composed of two large adaptins (gamma-type subunit and beta-type subunit), a medium adaptin (mu-type subunit) and a small adaptin (sigma-type subunit). Expressed in roots, stems, leaves, flowers and siliques (developing fruits and seeds).

It localises to the golgi apparatus. The protein resides in the cytoplasmic vesicle. The protein localises to the clathrin-coated vesicle membrane. Its function is as follows. Subunit of clathrin-associated adaptor protein complex 1 that plays a role in protein sorting at the trans-Golgi network and early endosomes (TGN/EE). The AP complexes mediate the recruitment of clathrin to membranes and the recognition of sorting signals within the cytosolic tails of transmembrane cargo molecules. In Arabidopsis thaliana (Mouse-ear cress), this protein is AP-1 complex subunit sigma-2 (AAP19-2).